A 3590-amino-acid chain; its full sequence is Filamentous hemagglutinin (3590 aa).

2 disordered regions span residues 3256 to 3309 (GGGS…VEVS) and 3417 to 3498 (APPP…GRHV). Positions 3289 to 3299 (PSRPTTPPASP) are enriched in pro residues. Positions 3300–3309 (QPIRATVEVS) are enriched in low complexity. Positions 3417 to 3432 (APPPVVETAQPLPPVK) are enriched in pro residues.

The protein localises to the cell surface. Its function is as follows. Evidence for a role in host-cell binding and infection. This chain is Filamentous hemagglutinin (fhaB), found in Bordetella pertussis (strain Tohama I / ATCC BAA-589 / NCTC 13251).